Reading from the N-terminus, the 565-residue chain is Dihydroxy-acid dehydratase (565 aa).

Mg(2+) is bound at residue aspartate 80. Cysteine 121 provides a ligand contact to [2Fe-2S] cluster. Mg(2+)-binding residues include aspartate 122 and lysine 123. Lysine 123 bears the N6-carboxylysine mark. Cysteine 194 is a [2Fe-2S] cluster binding site. Glutamate 447 is a Mg(2+) binding site. Serine 473 serves as the catalytic Proton acceptor.

Belongs to the IlvD/Edd family. Homodimer. [2Fe-2S] cluster is required as a cofactor. Requires Mg(2+) as cofactor.

The catalysed reaction is (2R)-2,3-dihydroxy-3-methylbutanoate = 3-methyl-2-oxobutanoate + H2O. The enzyme catalyses (2R,3R)-2,3-dihydroxy-3-methylpentanoate = (S)-3-methyl-2-oxopentanoate + H2O. It functions in the pathway amino-acid biosynthesis; L-isoleucine biosynthesis; L-isoleucine from 2-oxobutanoate: step 3/4. Its pathway is amino-acid biosynthesis; L-valine biosynthesis; L-valine from pyruvate: step 3/4. Functionally, functions in the biosynthesis of branched-chain amino acids. Catalyzes the dehydration of (2R,3R)-2,3-dihydroxy-3-methylpentanoate (2,3-dihydroxy-3-methylvalerate) into 2-oxo-3-methylpentanoate (2-oxo-3-methylvalerate) and of (2R)-2,3-dihydroxy-3-methylbutanoate (2,3-dihydroxyisovalerate) into 2-oxo-3-methylbutanoate (2-oxoisovalerate), the penultimate precursor to L-isoleucine and L-valine, respectively. The polypeptide is Dihydroxy-acid dehydratase (Chlorobium phaeovibrioides (strain DSM 265 / 1930) (Prosthecochloris vibrioformis (strain DSM 265))).